A 327-amino-acid chain; its full sequence is 2-methoxy-6-polyprenyl-1,4-benzoquinol methylase, mitochondrial (327 aa).

Residues Met1–Ala49 constitute a mitochondrion transit peptide. S-adenosyl-L-methionine-binding positions include Thr117, Asp171, and Asp199 to Ala200.

The protein belongs to the class I-like SAM-binding methyltransferase superfamily. MenG/UbiE family. Component of a multi-subunit COQ enzyme complex, composed of at least COQ3, COQ4, COQ5, COQ6, COQ7 and COQ9. Interacts with PYURF; the interaction is direct, stabilizes COQ5 protein and associates PYURF with COQ enzyme complex.

The protein localises to the mitochondrion inner membrane. It catalyses the reaction 2-methoxy-6-(all-trans-decaprenyl)benzene-1,4-diol + S-adenosyl-L-methionine = 5-methoxy-2-methyl-3-(all-trans-decaprenyl)benzene-1,4-diol + S-adenosyl-L-homocysteine + H(+). Its pathway is cofactor biosynthesis; ubiquinone biosynthesis. Functionally, methyltransferase required for the conversion of 2-decaprenyl-6-methoxy-1,4-benzoquinol (DDMQH2) to 2-decaprenyl-3-methyl-6-methoxy-1,4-benzoquinol (DMQH2). This chain is 2-methoxy-6-polyprenyl-1,4-benzoquinol methylase, mitochondrial, found in Mus musculus (Mouse).